The primary structure comprises 432 residues: Pachytene checkpoint protein 2 homolog (432 aa).

Met1 carries the N-acetylmethionine modification. 179 to 186 (GPPGTGKT) provides a ligand contact to ATP.

It belongs to the AAA ATPase family. PCH2 subfamily. In terms of assembly, specifically interacts with the ligand binding domain of the thyroid receptor (TR). This interaction does not require the presence of thyroid hormone for its interaction. Interacts with proteasome subunit PSMA8; to participate in meiosis progression during spermatogenesis.

In terms of biological role, plays a key role in chromosome recombination and chromosome structure development during meiosis. Required at early steps in meiotic recombination that leads to non-crossovers pathways. Also needed for efficient completion of homologous synapsis by influencing crossover distribution along the chromosomes affecting both crossovers and non-crossovers pathways. Also required for development of higher-order chromosome structures and is needed for synaptonemal-complex formation. In males, required for efficient synapsis of the sex chromosomes and for sex body formation. Promotes early steps of the DNA double-strand breaks (DSBs) repair process upstream of the assembly of RAD51 complexes. Required for depletion of HORMAD1 and HORMAD2 from synapsed chromosomes. Plays a role in mitotic spindle assembly checkpoint (SAC) activation. In Rattus norvegicus (Rat), this protein is Pachytene checkpoint protein 2 homolog (Trip13).